The primary structure comprises 375 residues: Succinyl-diaminopimelate desuccinylase (375 aa).

His-66 is a binding site for Zn(2+). Asp-68 is a catalytic residue. Asp-99 serves as a coordination point for Zn(2+). Residue Glu-133 is the Proton acceptor of the active site. Zn(2+) contacts are provided by Glu-134, Glu-162, and His-348.

It belongs to the peptidase M20A family. DapE subfamily. In terms of assembly, homodimer. It depends on Zn(2+) as a cofactor. The cofactor is Co(2+).

It catalyses the reaction N-succinyl-(2S,6S)-2,6-diaminopimelate + H2O = (2S,6S)-2,6-diaminopimelate + succinate. The protein operates within amino-acid biosynthesis; L-lysine biosynthesis via DAP pathway; LL-2,6-diaminopimelate from (S)-tetrahydrodipicolinate (succinylase route): step 3/3. Functionally, catalyzes the hydrolysis of N-succinyl-L,L-diaminopimelic acid (SDAP), forming succinate and LL-2,6-diaminopimelate (DAP), an intermediate involved in the bacterial biosynthesis of lysine and meso-diaminopimelic acid, an essential component of bacterial cell walls. This Shigella dysenteriae serotype 1 (strain Sd197) protein is Succinyl-diaminopimelate desuccinylase.